Consider the following 1104-residue polypeptide: SWI/SNF complex subunit SMARCC1 (1104 aa).

The tract at residues L27–T301 is marR-like, BRCT and chromo domains module. Residues P37–C163 enclose the MarR-like domain. Residues P167 to S210 enclose the BRCT; N-terminus domain. Residue K178 forms a Glycyl lysine isopeptide (Lys-Gly) (interchain with G-Cter in SUMO2) linkage. Positions E216–H244 constitute a Chromo domain. Residues K260–Y284 enclose the BRCT; C-terminus domain. Positions F295 to T445 are disordered. Positions T301–A317 are enriched in basic and acidic residues. A phosphoserine mark is found at S309, S327, and S329. At T334 the chain carries Phosphothreonine. Residues K344 and K345 each carry the N6-acetyllysine modification. Residue S349 is modified to Phosphoserine. An N6-acetyllysine modification is found at K353. Residue S356 is modified to Phosphoserine. The residue at position 358 (K358) is an N6-acetyllysine; alternate. Residue K358 forms a Glycyl lysine isopeptide (Lys-Gly) (interchain with G-Cter in SUMO2); alternate linkage. T397 is subject to Phosphothreonine. Residues I448–M545 enclose the SWIRM domain. S572 is modified (phosphoserine). K591 participates in a covalent cross-link: Glycyl lysine isopeptide (Lys-Gly) (interchain with G-Cter in SUMO2). The 52-residue stretch at S617–P668 folds into the SANT domain. A Glycyl lysine isopeptide (Lys-Gly) (interchain with G-Cter in SUMO2) cross-link involves residue K738. A disordered region spans residues A744–E859. At S775 the chain carries Phosphoserine. Residues S775–P784 show a composition bias toward acidic residues. Residues Q788–E859 are compositionally biased toward basic and acidic residues. Residue K795 forms a Glycyl lysine isopeptide (Lys-Gly) (interchain with G-Cter in SUMO2) linkage. 2 positions are modified to phosphoserine: S821 and S824. Residues K828 and K855 each participate in a glycyl lysine isopeptide (Lys-Gly) (interchain with G-Cter in SUMO2) cross-link. Residues K909 to Q945 are a coiled coil. Residue K947 is modified to N6-acetyllysine. Disordered regions lie at residues Q955 to G1021 and I1041 to P1104. Low complexity predominate over residues Q956 to H973. Composition is skewed to pro residues over residues Q994–I1017 and P1048–P1057. Position 1064 is an asymmetric dimethylarginine (R1064). The span at M1073–P1104 shows a compositional bias: pro residues.

Belongs to the SMARCC family. As to quaternary structure, component of the multiprotein chromatin-remodeling complexes SWI/SNF: SWI/SNF-A (BAF), SWI/SNF-B (PBAF) and related complexes. The canonical complex contains a catalytic subunit (either SMARCA4/BRG1/BAF190A or SMARCA2/BRM/BAF190B) and at least SMARCE1, ACTL6A/BAF53, SMARCC1/BAF155, SMARCC2/BAF170, and SMARCB1/SNF5/BAF47. Other subunits specific to each of the complexes may also be present permitting several possible combinations developmentally and tissue specific. Component of the BAF complex, which includes at least actin (ACTB), ARID1A/BAF250A, ARID1B/BAF250B, SMARCA2/BRM, SMARCA4/BRG1, ACTL6A/BAF53, ACTL6B/BAF53B, SMARCE1/BAF57, SMARCC1/BAF155, SMARCC2/BAF170, SMARCB1/SNF5/INI1, and one or more SMARCD1/BAF60A, SMARCD2/BAF60B, or SMARCD3/BAF60C. In muscle cells, the BAF complex also contains DPF3. Component of neural progenitors-specific chromatin remodeling complex (npBAF complex) composed of at least, ARID1A/BAF250A or ARID1B/BAF250B, SMARCD1/BAF60A, SMARCD3/BAF60C, SMARCA2/BRM/BAF190B, SMARCA4/BRG1/BAF190A, SMARCB1/BAF47, SMARCC1/BAF155, SMARCE1/BAF57, SMARCC2/BAF170, PHF10/BAF45A, ACTL6A/BAF53A and actin. Component of neuron-specific chromatin remodeling complex (nBAF complex) composed of at least, ARID1A/BAF250A or ARID1B/BAF250B, SMARCD1/BAF60A, SMARCD3/BAF60C, SMARCA2/BRM/BAF190B, SMARCA4/BRG1/BAF190A, SMARCB1/BAF47, SMARCC1/BAF155, SMARCE1/BAF57, SMARCC2/BAF170, DPF1/BAF45B, DPF3/BAF45C, ACTL6B/BAF53B and actin. Component of the SWI/SNF-B (PBAF) chromatin remodeling complex, at least composed of SMARCA4/BRG1, SMARCB1/BAF47/SNF5, ACTL6A/BAF53A or ACTL6B/BAF53B, SMARCE1/BAF57, SMARCD1/BAF60A, SMARCD2/BAF60B, perhaps SMARCD3/BAF60C, SMARCC1/BAF155, SMARCC2/BAF170, PBRM1/BAF180, ARID2/BAF200 and actin. Component of SWI/SNF (GBAF) subcomplex, which includes at least BICRA or BICRAL (mutually exclusive), BRD9, SS18, SMARCA2/BRM, SMARCA4/BRG1/BAF190A, ACTL6A/BAF53, SMARCC1/BAF155, and SMARCD1/BAF60A. May also interact with the SIN3A histone deacetylase transcription repressor complex in conjunction with SMARCA2 and SMARCA4. The minimal complex composed of SMARCC1 and SMARCA4 seems to be able to associate with cyclin such as CCNE1 or transcription factors such as KLF1 or GATA1. Interacts with NR3C1 and SMARD1. Interacts with TRIP12; leading to disrupt interaction between TRIP12 and SMARCE1 and prevent SMARCE1 ubiquitination. Interacts with CEBPB (when not methylated). Interacts with KDM6B. Interacts with MKKS; the interaction takes place predominantly in the cytoplasm and may modulate SMARCC1 location. Interacts with DPF2. Interacts with PRDM1/BLIMP1. Interacts with DPF3a (isoform 2 of DPF3/BAF45C) and with HDGFL2 in a DPF3a-dependent manner. In terms of tissue distribution, highly expressed in adult brain, testis and thymus.

The protein localises to the nucleus. Its subcellular location is the cytoplasm. Functionally, involved in transcriptional activation and repression of select genes by chromatin remodeling (alteration of DNA-nucleosome topology). Component of SWI/SNF chromatin remodeling complexes that carry out key enzymatic activities, changing chromatin structure by altering DNA-histone contacts within a nucleosome in an ATP-dependent manner. May stimulate the ATPase activity of the catalytic subunit of the complex. Belongs to the neural progenitors-specific chromatin remodeling complex (npBAF complex) and the neuron-specific chromatin remodeling complex (nBAF complex). During neural development a switch from a stem/progenitor to a postmitotic chromatin remodeling mechanism occurs as neurons exit the cell cycle and become committed to their adult state. The transition from proliferating neural stem/progenitor cells to postmitotic neurons requires a switch in subunit composition of the npBAF and nBAF complexes. As neural progenitors exit mitosis and differentiate into neurons, npBAF complexes which contain ACTL6A/BAF53A and PHF10/BAF45A, are exchanged for homologous alternative ACTL6B/BAF53B and DPF1/BAF45B or DPF3/BAF45C subunits in neuron-specific complexes (nBAF). The npBAF complex is essential for the self-renewal/proliferative capacity of the multipotent neural stem cells. The nBAF complex along with CREST plays a role regulating the activity of genes essential for dendrite growth. The chain is SWI/SNF complex subunit SMARCC1 (Smarcc1) from Mus musculus (Mouse).